A 396-amino-acid chain; its full sequence is MFENITAAPADPILGLADLFRADERPGKINLGIGVYKDETGKTPVLTSVKKAEQYLLENETTKNYLGIDGIPEFGRCTQELLFGKGSALINDKRARTAQTPGGTGALRVAADFLAKNTSVKRVWVSNPSWPNHKSVFNSAGLEVREYAYYDAENHTLDFDALINSLNEAQAGDVVLFHGCCHNPTGIDPTLEQWQTLAQLSVEKGWLPLFDFAYQGFARGLEEDAEGLRAFAAMHKELIVASSYSKNFGLYNERVGACTLVAADSETVDRAFSQMKAAIRANYSNPPAHGASVVATILSNDALRAIWEQELTDMRQRIQRMRQLFVNTLQEKGANRDFSFIIKQNGMFSFSGLTKEQVLRLREEFGVYAVASGRVNVAGMTPDNMAPLCEAIVAVL.

L-aspartate is bound by residues glycine 34, tryptophan 130, and asparagine 183. Lysine 246 carries the N6-(pyridoxal phosphate)lysine modification. Arginine 374 contributes to the L-aspartate binding site.

Belongs to the class-I pyridoxal-phosphate-dependent aminotransferase family. In terms of assembly, homodimer. The cofactor is pyridoxal 5'-phosphate.

It localises to the cytoplasm. It carries out the reaction L-aspartate + 2-oxoglutarate = oxaloacetate + L-glutamate. This Escherichia coli (strain K12) protein is Aspartate aminotransferase (aspC).